The following is a 142-amino-acid chain: Large ribosomal subunit protein uL13 (142 aa).

This sequence belongs to the universal ribosomal protein uL13 family. Part of the 50S ribosomal subunit.

This protein is one of the early assembly proteins of the 50S ribosomal subunit, although it is not seen to bind rRNA by itself. It is important during the early stages of 50S assembly. This Alkaliphilus metalliredigens (strain QYMF) protein is Large ribosomal subunit protein uL13.